The sequence spans 350 residues: Twinfilin-1 (350 aa).

The residue at position 2 (S2) is an N-acetylserine. The ADF-H 1 domain occupies 2–139 (SHQTGIQASE…SLHGYKKYLL (138 aa)). Residues S143 and S277 each carry the phosphoserine modification. An ADF-H 2 domain is found at 175–313 (LQGVAFPISR…TADFLYEEVH (139 aa)). Y309 carries the phosphotyrosine modification. The tract at residues 316-350 (QHAHKQSFAKPKGPAGKRGIRRLIRGPAETEATTD) is disordered. A Phosphothreonine modification is found at T349.

This sequence belongs to the actin-binding proteins ADF family. Twinfilin subfamily. Interacts with G-actin; ADP-actin form and capping protein (CP). May also be able to interact with TWF2 and phosphoinositides, PI(4,5)P2. When bound to PI(4,5)P2, it is down-regulated. Interacts with ACTG1. Phosphorylated on serine and threonine residues. As to expression, expressed at high levels in the colon, testis, ovary, prostate and lung. Expressed at lower levels in the brain, bladder and heart. Not detected in liver.

The protein resides in the cytoplasm. It is found in the cytoskeleton. Its function is as follows. Actin-binding protein involved in motile and morphological processes. Inhibits actin polymerization, likely by sequestering G-actin. By capping the barbed ends of filaments, it also regulates motility. Seems to play an important role in clathrin-mediated endocytosis and distribution of endocytic organelles. This Homo sapiens (Human) protein is Twinfilin-1 (TWF1).